Reading from the N-terminus, the 148-residue chain is Arginine repressor (148 aa).

This sequence belongs to the ArgR family.

It localises to the cytoplasm. Its pathway is amino-acid biosynthesis; L-arginine biosynthesis [regulation]. Its function is as follows. Regulates arginine biosynthesis genes. This is Arginine repressor from Prosthecochloris aestuarii (strain DSM 271 / SK 413).